The primary structure comprises 425 residues: UDP-N-acetylglucosamine 1-carboxyvinyltransferase (425 aa).

22–23 (KN) provides a ligand contact to phosphoenolpyruvate. Residue arginine 93 participates in UDP-N-acetyl-alpha-D-glucosamine binding. Cysteine 117 functions as the Proton donor in the catalytic mechanism. Residue cysteine 117 is modified to 2-(S-cysteinyl)pyruvic acid O-phosphothioketal. Residues 122-126 (RPVDL), 162-165 (KVSV), aspartate 307, and isoleucine 329 each bind UDP-N-acetyl-alpha-D-glucosamine.

This sequence belongs to the EPSP synthase family. MurA subfamily.

It is found in the cytoplasm. It carries out the reaction phosphoenolpyruvate + UDP-N-acetyl-alpha-D-glucosamine = UDP-N-acetyl-3-O-(1-carboxyvinyl)-alpha-D-glucosamine + phosphate. It functions in the pathway cell wall biogenesis; peptidoglycan biosynthesis. Its function is as follows. Cell wall formation. Adds enolpyruvyl to UDP-N-acetylglucosamine. The protein is UDP-N-acetylglucosamine 1-carboxyvinyltransferase of Pasteurella multocida (strain Pm70).